The primary structure comprises 121 residues: Large ribosomal subunit protein uL14 (121 aa).

Belongs to the universal ribosomal protein uL14 family. In terms of assembly, part of the 50S ribosomal subunit. Forms a cluster with proteins L3 and L19. In the 70S ribosome, L14 and L19 interact and together make contacts with the 16S rRNA in bridges B5 and B8.

Binds to 23S rRNA. Forms part of two intersubunit bridges in the 70S ribosome. The sequence is that of Large ribosomal subunit protein uL14 from Bacteroides fragilis (strain ATCC 25285 / DSM 2151 / CCUG 4856 / JCM 11019 / LMG 10263 / NCTC 9343 / Onslow / VPI 2553 / EN-2).